A 411-amino-acid polypeptide reads, in one-letter code: LL-diaminopimelate aminotransferase (411 aa).

Substrate is bound by residues Y15 and G42. Pyridoxal 5'-phosphate contacts are provided by residues Y72, 108–109 (AK), Y132, N188, Y219, and 247–249 (SFS). Substrate contacts are provided by K109, Y132, and N188. K250 carries the N6-(pyridoxal phosphate)lysine modification. R258 and N293 together coordinate pyridoxal 5'-phosphate. Positions 293 and 389 each coordinate substrate.

It belongs to the class-I pyridoxal-phosphate-dependent aminotransferase family. LL-diaminopimelate aminotransferase subfamily. As to quaternary structure, homodimer. Requires pyridoxal 5'-phosphate as cofactor.

The enzyme catalyses (2S,6S)-2,6-diaminopimelate + 2-oxoglutarate = (S)-2,3,4,5-tetrahydrodipicolinate + L-glutamate + H2O + H(+). It participates in amino-acid biosynthesis; L-lysine biosynthesis via DAP pathway; LL-2,6-diaminopimelate from (S)-tetrahydrodipicolinate (aminotransferase route): step 1/1. Its function is as follows. Involved in the synthesis of meso-diaminopimelate (m-DAP or DL-DAP), required for both lysine and peptidoglycan biosynthesis. Catalyzes the direct conversion of tetrahydrodipicolinate to LL-diaminopimelate. Is also able to catalyze the reverse reaction in vitro, i.e. the transamination of LL-diaminopimelate with 2-oxoglutarate to produce tetrahydrodipicolinate and glutamate. Can also use m-DAP instead of LL-DAP as the amino-group donor, and oxaloacetate or pyruvate as the amino-group acceptor. The protein is LL-diaminopimelate aminotransferase of Desulfitobacterium hafniense (strain DSM 10664 / DCB-2).